Here is a 788-residue protein sequence, read N- to C-terminus: Endonuclease MutS2 (788 aa).

334 to 341 (GPNTGGKT) is a binding site for ATP. One can recognise a Smr domain in the interval 713–788 (LDLRGKRYEE…GNGATVVKFQ (76 aa)).

This sequence belongs to the DNA mismatch repair MutS family. MutS2 subfamily. Homodimer. Binds to stalled ribosomes, contacting rRNA.

Functionally, endonuclease that is involved in the suppression of homologous recombination and thus may have a key role in the control of bacterial genetic diversity. Acts as a ribosome collision sensor, splitting the ribosome into its 2 subunits. Detects stalled/collided 70S ribosomes which it binds and splits by an ATP-hydrolysis driven conformational change. Acts upstream of the ribosome quality control system (RQC), a ribosome-associated complex that mediates the extraction of incompletely synthesized nascent chains from stalled ribosomes and their subsequent degradation. Probably generates substrates for RQC. This Enterococcus faecalis (strain ATCC 700802 / V583) protein is Endonuclease MutS2.